Consider the following 771-residue polypeptide: 5-methyltetrahydropteroyltriglutamate--homocysteine methyltransferase (771 aa).

Residues 13–16 (RELK) and K128 contribute to the 5-methyltetrahydropteroyltri-L-glutamate site. L-homocysteine is bound by residues 451–453 (IGS) and E504. L-methionine-binding positions include 451–453 (IGS) and E504. 5-methyltetrahydropteroyltri-L-glutamate-binding positions include 535-536 (RC) and W581. D619 is a binding site for L-homocysteine. D619 is a binding site for L-methionine. E625 is a binding site for 5-methyltetrahydropteroyltri-L-glutamate. Zn(2+)-binding residues include H661, C663, and E685. Catalysis depends on H714, which acts as the Proton donor. C746 serves as a coordination point for Zn(2+).

It belongs to the vitamin-B12 independent methionine synthase family. Zn(2+) is required as a cofactor.

The catalysed reaction is 5-methyltetrahydropteroyltri-L-glutamate + L-homocysteine = tetrahydropteroyltri-L-glutamate + L-methionine. Its pathway is amino-acid biosynthesis; L-methionine biosynthesis via de novo pathway; L-methionine from L-homocysteine (MetE route): step 1/1. Catalyzes the transfer of a methyl group from 5-methyltetrahydrofolate to homocysteine resulting in methionine formation. This chain is 5-methyltetrahydropteroyltriglutamate--homocysteine methyltransferase, found in Nitrobacter winogradskyi (strain ATCC 25391 / DSM 10237 / CIP 104748 / NCIMB 11846 / Nb-255).